The following is a 602-amino-acid chain: ATP-dependent lipid A-core flippase 1 (602 aa).

5 helical membrane passes run 36 to 56, 80 to 100, 154 to 174, 176 to 196, and 261 to 281; these read LGFV…VYFL, LFII…NYCL, ILTI…MFYY, WQLS…VSVV, and ASVP…FYAI. In terms of domain architecture, ABC transmembrane type-1 spans 39 to 321; sequence VAAIIGMLGY…LTNVNSEFQQ (283 aa). One can recognise an ABC transporter domain in the interval 362–599; sequence YKNTNTMTTS…QGAYAQLHSF (238 aa). 398–405 is an ATP binding site; that stretch reads GRSGSGKS.

The protein belongs to the ABC transporter superfamily. Lipid exporter (TC 3.A.1.106) family. In terms of assembly, homodimer.

Its subcellular location is the cell inner membrane. It catalyses the reaction ATP + H2O + lipid A-core oligosaccharideSide 1 = ADP + phosphate + lipid A-core oligosaccharideSide 2.. Functionally, involved in lipopolysaccharide (LPS) biosynthesis. Translocates lipid A-core from the inner to the outer leaflet of the inner membrane. Transmembrane domains (TMD) form a pore in the inner membrane and the ATP-binding domain (NBD) is responsible for energy generation. The protein is ATP-dependent lipid A-core flippase 1 of Colwellia psychrerythraea (strain 34H / ATCC BAA-681) (Vibrio psychroerythus).